The chain runs to 386 residues: RNA polymerase sigma factor SigA (386 aa).

Residues 154–224 (LAEANLRLVV…TRAIADQART (71 aa)) form a sigma-70 factor domain-2 region. The Interaction with polymerase core subunit RpoC signature appears at 178–181 (DLIQ). The segment at 233–309 (ETINKLIRVQ…DDVIESPVDY (77 aa)) is sigma-70 factor domain-3. The interval 322-375 (VMDTLTDREENVLRMRFGLDDGRMHTLEDVGKQFKVTRERIRQIEAKAIKKLRH) is sigma-70 factor domain-4. A DNA-binding region (H-T-H motif) is located at residues 348 to 367 (LEDVGKQFKVTRERIRQIEA).

The protein belongs to the sigma-70 factor family. RpoD/SigA subfamily. Interacts transiently with the RNA polymerase catalytic core.

It is found in the cytoplasm. Its function is as follows. Sigma factors are initiation factors that promote the attachment of RNA polymerase to specific initiation sites and are then released. This sigma factor is the primary sigma factor during exponential growth. The polypeptide is RNA polymerase sigma factor SigA (Lactococcus lactis subsp. lactis (strain IL1403) (Streptococcus lactis)).